A 444-amino-acid chain; its full sequence is Homogentisate 1,2-dioxygenase (444 aa).

Catalysis depends on His-298, which acts as the Proton acceptor. Fe cation contacts are provided by His-341 and Glu-347. Residues Tyr-356 and His-377 each coordinate homogentisate. His-377 contacts Fe cation.

Belongs to the homogentisate dioxygenase family. Hexamer; dimer of trimers. The cofactor is Fe cation.

It carries out the reaction homogentisate + O2 = 4-maleylacetoacetate + H(+). Its pathway is amino-acid degradation; L-phenylalanine degradation; acetoacetate and fumarate from L-phenylalanine: step 4/6. Functionally, involved in the catabolism of homogentisate (2,5-dihydroxyphenylacetate or 2,5-OH-PhAc), a central intermediate in the degradation of phenylalanine and tyrosine. Catalyzes the oxidative ring cleavage of the aromatic ring of homogentisate to yield maleylacetoacetate. This Burkholderia orbicola (strain AU 1054) protein is Homogentisate 1,2-dioxygenase.